The following is a 230-amino-acid chain: Orotidine 5'-phosphate decarboxylase (230 aa).

Substrate is bound by residues D11, K34, 61–70, T117, R179, Q188, G208, and R209; that span reads DLKLHDIPNT. K63 functions as the Proton donor in the catalytic mechanism.

It belongs to the OMP decarboxylase family. Type 1 subfamily. In terms of assembly, homodimer.

It catalyses the reaction orotidine 5'-phosphate + H(+) = UMP + CO2. Its pathway is pyrimidine metabolism; UMP biosynthesis via de novo pathway; UMP from orotate: step 2/2. In terms of biological role, catalyzes the decarboxylation of orotidine 5'-monophosphate (OMP) to uridine 5'-monophosphate (UMP). The sequence is that of Orotidine 5'-phosphate decarboxylase from Streptococcus pyogenes serotype M1.